The following is a 459-amino-acid chain: tRNA modification GTPase MnmE (459 aa).

The (6S)-5-formyl-5,6,7,8-tetrahydrofolate site is built by Arg22, Glu85, and Arg124. Positions 221 to 380 constitute a TrmE-type G domain; the sequence is GLSTVIVGKP…LEIQIRDLFF (160 aa). Residue Asn231 coordinates K(+). Residues 231–236, 250–256, and 275–278 each bind GTP; these read NVGKSS, TEVAGTT, and DTAG. Ser235 lines the Mg(2+) pocket. K(+) is bound by residues Thr250, Val252, and Thr255. Thr256 is a Mg(2+) binding site. Position 459 (Lys459) interacts with (6S)-5-formyl-5,6,7,8-tetrahydrofolate.

This sequence belongs to the TRAFAC class TrmE-Era-EngA-EngB-Septin-like GTPase superfamily. TrmE GTPase family. In terms of assembly, homodimer. Heterotetramer of two MnmE and two MnmG subunits. It depends on K(+) as a cofactor.

It is found in the cytoplasm. Its function is as follows. Exhibits a very high intrinsic GTPase hydrolysis rate. Involved in the addition of a carboxymethylaminomethyl (cmnm) group at the wobble position (U34) of certain tRNAs, forming tRNA-cmnm(5)s(2)U34. This chain is tRNA modification GTPase MnmE, found in Staphylococcus aureus (strain MW2).